The primary structure comprises 943 residues: Multimerin-2 (943 aa).

An N-terminal signal peptide occupies residues 1–22 (MIPTLLLGFGVYLSWGLLGSWA). The 79-residue stretch at 54–132 (RRNWCPYQKS…PGFQGPDCQD (79 aa)) folds into the EMI domain. 3 disulfides stabilise this stretch: cysteine 58–cysteine 122, cysteine 85–cysteine 92, and cysteine 121–cysteine 130. An O-linked (Fuc...) serine glycan is attached at serine 63. Threonine 67 carries O-linked (Fuc) threonine glycosylation. A disordered region spans residues 128–150 (PDCQDHNPTANPEPTEPSGKLQE). N-linked (GlcNAc...) asparagine glycans are attached at residues asparagine 205, asparagine 214, asparagine 249, asparagine 261, asparagine 350, asparagine 379, asparagine 439, and asparagine 472. Coiled coils occupy residues 391–480 (EEEL…HLHA) and 551–580 (RGEGERARAERARIRSQLRALDHAVEALKT). A glycan (N-linked (GlcNAc...) asparagine) is linked at asparagine 583. Positions 688–720 (DSGREEEAMTLAELEQEIRRLSSDVKQIGQCCE) form a coiled coil. Asparagine 728 and asparagine 766 each carry an N-linked (GlcNAc...) asparagine glycan. The segment at 778–801 (LSKKDKKQPRGPGESRKRDKKQVV) is disordered. Positions 815-943 (ETGSPVAFYA…AFGGFLMFKT (129 aa)) constitute a C1q domain. The N-linked (GlcNAc...) asparagine glycan is linked to asparagine 839.

In terms of assembly, heteromer of p110, p125, p140 and p200 subunits; disulfide-linked. Interacts with VEGFA. Interacts with CD93; this interaction promotes angiogenesis. Interacts with CD248. Post-translationally, N- and O-glycosylated. Processed by matrix metalloproteinases (MMPs) including MMP9 and, to a lesser degree, by MMP2 upon angiogenic stimulation. In terms of processing, O-fucosylated within the EMI domain (at Ser-63 and Thr-67) by FUT10/POFUT3 and FUT11/POFUT4.

It localises to the secreted. It is found in the extracellular space. Its subcellular location is the extracellular matrix. Its function is as follows. Extracellular matrix protein that plays significant roles in the vascular system and is required for the maintenance and stability of blood vessel. Affects several essential steps in angiogenesis including endothelial cell proliferation, migration, and tube formation. Positively regulates angiogenesis by acting as a ligand for CD93 receptor. In Mus musculus (Mouse), this protein is Multimerin-2.